The following is a 177-amino-acid chain: Large ribosomal subunit protein uL10 (177 aa).

It belongs to the universal ribosomal protein uL10 family. As to quaternary structure, part of the ribosomal stalk of the 50S ribosomal subunit. The N-terminus interacts with L11 and the large rRNA to form the base of the stalk. The C-terminus forms an elongated spine to which L12 dimers bind in a sequential fashion forming a multimeric L10(L12)X complex.

Its function is as follows. Forms part of the ribosomal stalk, playing a central role in the interaction of the ribosome with GTP-bound translation factors. This chain is Large ribosomal subunit protein uL10, found in Legionella pneumophila (strain Paris).